The chain runs to 81 residues: Large ribosomal subunit protein bL31 (81 aa).

Zn(2+) contacts are provided by cysteine 16, cysteine 18, cysteine 38, and cysteine 41.

This sequence belongs to the bacterial ribosomal protein bL31 family. Type A subfamily. As to quaternary structure, part of the 50S ribosomal subunit. Requires Zn(2+) as cofactor.

Its function is as follows. Binds the 23S rRNA. The protein is Large ribosomal subunit protein bL31 of Mycobacterium marinum (strain ATCC BAA-535 / M).